A 131-amino-acid polypeptide reads, in one-letter code: Translation initiation factor 5A (131 aa).

Hypusine is present on K37.

The protein belongs to the eIF-5A family.

The protein localises to the cytoplasm. Functionally, functions by promoting the formation of the first peptide bond. This chain is Translation initiation factor 5A (eIF5A), found in Methanococcus maripaludis (strain C5 / ATCC BAA-1333).